Reading from the N-terminus, the 272-residue chain is Tryptophan synthase alpha chain (272 aa).

Catalysis depends on proton acceptor residues E49 and E60.

It belongs to the TrpA family. In terms of assembly, tetramer of two alpha and two beta chains.

It catalyses the reaction (1S,2R)-1-C-(indol-3-yl)glycerol 3-phosphate + L-serine = D-glyceraldehyde 3-phosphate + L-tryptophan + H2O. It functions in the pathway amino-acid biosynthesis; L-tryptophan biosynthesis; L-tryptophan from chorismate: step 5/5. The alpha subunit is responsible for the aldol cleavage of indoleglycerol phosphate to indole and glyceraldehyde 3-phosphate. In Legionella pneumophila subsp. pneumophila (strain Philadelphia 1 / ATCC 33152 / DSM 7513), this protein is Tryptophan synthase alpha chain.